Consider the following 290-residue polypeptide: tRNA(Ile)-lysidine synthase, chloroplastic (290 aa).

33 to 38 (SGGQDS) lines the ATP pocket.

This sequence belongs to the tRNA(Ile)-lysidine synthase family.

Its subcellular location is the plastid. It is found in the chloroplast. The enzyme catalyses cytidine(34) in tRNA(Ile2) + L-lysine + ATP = lysidine(34) in tRNA(Ile2) + AMP + diphosphate + H(+). In terms of biological role, ligates lysine onto the cytidine present at position 34 of the AUA codon-specific tRNA(Ile) that contains the anticodon CAU, in an ATP-dependent manner. Cytidine is converted to lysidine, thus changing the amino acid specificity of the tRNA from methionine to isoleucine. The sequence is that of tRNA(Ile)-lysidine synthase, chloroplastic from Cyanidioschyzon merolae (strain NIES-3377 / 10D) (Unicellular red alga).